Here is a 67-residue protein sequence, read N- to C-terminus: Moricin (67 aa).

The signal sequence occupies residues 1-23 (MKLTSLFIFVIVALSLLFSSTDA).

This sequence belongs to the moricin family. As to quaternary structure, monomer.

It localises to the secreted. Its function is as follows. Antimicrobial peptide. Active against a broad spectrum of Gram-positive and Gram-negative bacteria including methicillin-resistant S.aureus ATCC 43 300, S.aureus BAA-39, pathogenic strains of L.monocytogenes, K.pneumoniae, E.coli O157:H7, S.typhimurium and multidrug-resistant S.typhimurium DT104 with minimum inhibitory concentration (MIC) of 1.4 uM for all except for S.aureus BAA-39. Also active against Serratia marcescens. Probably acts by disturbing membrane functions with its amphipathic alpha-helical structure. May protect a developing embryo from bacterial infection. This Manduca sexta (Tobacco hawkmoth) protein is Moricin.